Consider the following 228-residue polypeptide: UPF0758 protein CLD_1541 (228 aa).

Residues 106–228 (KINTPLDVSN…YVSMKEKGTI (123 aa)) enclose the MPN domain. 3 residues coordinate Zn(2+): histidine 177, histidine 179, and aspartate 190. A JAMM motif motif is present at residues 177 to 190 (HNHPSGDPTPSKED).

This sequence belongs to the UPF0758 family.

The chain is UPF0758 protein CLD_1541 from Clostridium botulinum (strain Okra / Type B1).